The following is a 72-amino-acid chain: Translation initiation factor IF-1 (72 aa).

The S1-like domain occupies 1–72; it reads MAKEDVIEVE…NRGRIVYRYK (72 aa).

This sequence belongs to the IF-1 family. Component of the 30S ribosomal translation pre-initiation complex which assembles on the 30S ribosome in the order IF-2 and IF-3, IF-1 and N-formylmethionyl-tRNA(fMet); mRNA recruitment can occur at any time during PIC assembly.

Its subcellular location is the cytoplasm. Its function is as follows. One of the essential components for the initiation of protein synthesis. Stabilizes the binding of IF-2 and IF-3 on the 30S subunit to which N-formylmethionyl-tRNA(fMet) subsequently binds. Helps modulate mRNA selection, yielding the 30S pre-initiation complex (PIC). Upon addition of the 50S ribosomal subunit IF-1, IF-2 and IF-3 are released leaving the mature 70S translation initiation complex. In Moorella thermoacetica (strain ATCC 39073 / JCM 9320), this protein is Translation initiation factor IF-1.